The following is a 77-amino-acid chain: Serine protease inhibitor 2 (77 aa).

A signal peptide spans 1–17 (MMFTPLIVLTLLVLATA). Disulfide bonds link Cys21/Cys53, Cys30/Cys48, Cys33/Cys44, Cys37/Cys74, and Cys55/Cys68. The TIL domain maps to 21 to 74 (CGPNEQWSDCPKCELQCGESDKPCATICGEPKCYCSPDKYRRIPDGRCIRKIQC).

The protein resides in the secreted. In terms of biological role, defends the organism against the host's proteinases. The polypeptide is Serine protease inhibitor 2 (Anisakis simplex (Herring worm)).